An 86-amino-acid chain; its full sequence is MLFRILSLNLIKIKKRRRRHLPNLLRRYQQLHVHNNRMEIFLVLLQRLHLLNLLLWPLYVLLHLLVVQYVQQHNKIQIQEQHLNKI.

This is an uncharacterized protein from Vaccinia virus (strain Copenhagen) (VACV).